Consider the following 361-residue polypeptide: 3-dehydroquinate synthase (361 aa).

NAD(+) is bound by residues 71 to 76 (DGEQNK), 105 to 109 (GVIGD), 129 to 130 (TT), Lys142, Lys151, and 169 to 172 (CLNT). Zn(2+) is bound by residues Glu184, His247, and His264.

The protein belongs to the sugar phosphate cyclases superfamily. Dehydroquinate synthase family. Requires Co(2+) as cofactor. Zn(2+) serves as cofactor. NAD(+) is required as a cofactor.

The protein localises to the cytoplasm. It catalyses the reaction 7-phospho-2-dehydro-3-deoxy-D-arabino-heptonate = 3-dehydroquinate + phosphate. Its pathway is metabolic intermediate biosynthesis; chorismate biosynthesis; chorismate from D-erythrose 4-phosphate and phosphoenolpyruvate: step 2/7. Catalyzes the conversion of 3-deoxy-D-arabino-heptulosonate 7-phosphate (DAHP) to dehydroquinate (DHQ). This Sodalis glossinidius (strain morsitans) protein is 3-dehydroquinate synthase.